Reading from the N-terminus, the 345-residue chain is V-type proton ATPase subunit d (345 aa).

Position 1 is an N-acetylmethionine (Met1).

This sequence belongs to the V-ATPase V0D/AC39 subunit family. As to quaternary structure, V-ATPase is a heteromultimeric enzyme composed of a peripheral catalytic V1 complex (components A to H) attached to an integral membrane V0 proton pore complex (components: a, c, c', c'', d, e, f and VOA1).

It localises to the vacuole membrane. In terms of biological role, subunit of the V0 complex of vacuolar(H+)-ATPase (V-ATPase), a multisubunit enzyme composed of a peripheral complex (V1) that hydrolyzes ATP and a membrane integral complex (V0) that translocates protons. V-ATPase is responsible for acidifying and maintaining the pH of intracellular compartments. This subunit is a non-integral membrane component of the membrane pore domain and is required for proper assembly of the V0 sector. Might be involved in the regulated assembly of V1 subunits onto the membrane sector or alternatively may prevent the passage of protons through V0 pores. The sequence is that of V-type proton ATPase subunit d from Saccharomyces cerevisiae (strain ATCC 204508 / S288c) (Baker's yeast).